Reading from the N-terminus, the 189-residue chain is SAGA-associated factor 11 homolog (189 aa).

The segment at 94-115 (CTCPNCDRLVAATRFAPHLEKC) adopts an SGF11-type zinc-finger fold. The segment at 128–189 (RRLATKEGSS…GSKKNNGKTF (62 aa)) is disordered. Over residues 136–145 (SSASSTSTST) the composition is skewed to low complexity. Position 165 is a phosphoserine (serine 165). A compositionally biased stretch (low complexity) spans 175 to 189 (NSRNNGSKKNNGKTF).

The protein belongs to the SGF11 family. In terms of assembly, component of some SAGA transcription coactivator-HAT complexes, at least composed of Ada2b, not/nonstop, Pcaf/Gcn5, Sgf11 and Spt3. Within the SAGA complex, Sgf11, e(y)2, and not/nonstop form an additional subcomplex of SAGA called the DUB module (deubiquitination module). Interacts directly with not/nonstop. Interacts with the AMEX complex component xmas-2. Interacts with Cbp80; important for promoter recruitment of Sgf11 that is not associated with the DUB module.

Its subcellular location is the nucleus. It localises to the nucleoplasm. The protein localises to the cytoplasm. In terms of biological role, component of the transcription regulatory histone acetylation (HAT) complex SAGA, a multiprotein complex that activates transcription by remodeling chromatin and mediating histone acetylation and deubiquitination. Within the SAGA complex, participates in a subcomplex that specifically deubiquitinates histone H2B. The SAGA complex is recruited to specific gene promoters by activators, where it is required for transcription. Required for nuclear receptor-mediated transactivation. Binds independently on SAGA to promoters in an RNA-dependent manner. Binds to mRNA and is essential for total mRNA export from the nucleus. Required to counteract heterochromatin silencing. Controls the development of neuronal connectivity in visual system by being required for accurate axon targeting in the optic lobe. Required for expression of ecdysone-induced genes such as br/broad. This chain is SAGA-associated factor 11 homolog, found in Drosophila virilis (Fruit fly).